A 428-amino-acid chain; its full sequence is GTPase Obg (428 aa).

Positions 1-158 constitute an Obg domain; it reads MFVDQVKIYV…RDVILELKVL (158 aa). Residues 159-329 form the OBG-type G domain; sequence ADVGLVGFPS…LLFEVANLIE (171 aa). GTP contacts are provided by residues 165-172, 190-194, 212-215, 282-285, and 310-312; these read GFPSVGKS, FTTIV, DLPG, NKMD, and SAV. Mg(2+) is bound by residues Ser-172 and Thr-192. The region spanning 350–428 is the OCT domain; the sequence is KFDTEGVKFE…ILEYEFEFID (79 aa).

The protein belongs to the TRAFAC class OBG-HflX-like GTPase superfamily. OBG GTPase family. As to quaternary structure, monomer. The cofactor is Mg(2+).

It is found in the cytoplasm. An essential GTPase which binds GTP, GDP and possibly (p)ppGpp with moderate affinity, with high nucleotide exchange rates and a fairly low GTP hydrolysis rate. Plays a role in control of the cell cycle, stress response, ribosome biogenesis and in those bacteria that undergo differentiation, in morphogenesis control. This is GTPase Obg from Bacillus cereus (strain B4264).